The sequence spans 477 residues: Cysteine--tRNA ligase (477 aa).

Cys28 contacts Zn(2+). The short motif at 30 to 40 is the 'HIGH' region element; that stretch reads PTVYDYAHIGN. Cys213, His238, and Glu242 together coordinate Zn(2+). Positions 270-274 match the 'KMSKS' region motif; that stretch reads KMSKS. An ATP-binding site is contributed by Lys273.

The protein belongs to the class-I aminoacyl-tRNA synthetase family. As to quaternary structure, monomer. Requires Zn(2+) as cofactor.

Its subcellular location is the cytoplasm. It carries out the reaction tRNA(Cys) + L-cysteine + ATP = L-cysteinyl-tRNA(Cys) + AMP + diphosphate. This is Cysteine--tRNA ligase (cysS) from Chlamydia trachomatis serovar D (strain ATCC VR-885 / DSM 19411 / UW-3/Cx).